We begin with the raw amino-acid sequence, 418 residues long: Serine hydroxymethyltransferase (418 aa).

Residues Leu121 and 125 to 127 each bind (6S)-5,6,7,8-tetrahydrofolate; that span reads GHL. At Lys230 the chain carries N6-(pyridoxal phosphate)lysine. 356–358 provides a ligand contact to (6S)-5,6,7,8-tetrahydrofolate; the sequence is SPF.

It belongs to the SHMT family. Homodimer. It depends on pyridoxal 5'-phosphate as a cofactor.

Its subcellular location is the cytoplasm. It carries out the reaction (6R)-5,10-methylene-5,6,7,8-tetrahydrofolate + glycine + H2O = (6S)-5,6,7,8-tetrahydrofolate + L-serine. Its pathway is one-carbon metabolism; tetrahydrofolate interconversion. It functions in the pathway amino-acid biosynthesis; glycine biosynthesis; glycine from L-serine: step 1/1. In terms of biological role, catalyzes the reversible interconversion of serine and glycine with tetrahydrofolate (THF) serving as the one-carbon carrier. This reaction serves as the major source of one-carbon groups required for the biosynthesis of purines, thymidylate, methionine, and other important biomolecules. Also exhibits THF-independent aldolase activity toward beta-hydroxyamino acids, producing glycine and aldehydes, via a retro-aldol mechanism. This Shewanella pealeana (strain ATCC 700345 / ANG-SQ1) protein is Serine hydroxymethyltransferase.